The primary structure comprises 572 residues: Enolase 4 (572 aa).

The segment at 181–204 (IEPVPSPVTSPALGKKKGSGKGKK) is disordered. Over residues 194-204 (GKKKGSGKGKK) the composition is skewed to basic residues. Glu288 serves as a coordination point for substrate. Lys468 serves as the catalytic Proton acceptor. Lys519 provides a ligand contact to substrate.

It belongs to the enolase family.

It catalyses the reaction (2R)-2-phosphoglycerate = phosphoenolpyruvate + H2O. It participates in carbohydrate degradation; glycolysis; pyruvate from D-glyceraldehyde 3-phosphate: step 4/5. This chain is Enolase 4 (eno4), found in Xenopus laevis (African clawed frog).